Consider the following 634-residue polypeptide: Chaperone protein HtpG (634 aa).

Residues 1–342 are a; substrate-binding; the sequence is MSVETQKETL…SNDLSLNVSR (342 aa). A b region spans residues 343-559; sequence EILQKDPVID…EQDLGLQMRQ (217 aa). The tract at residues 560–634 is c; sequence ILEASGQKVP…LNKLLVELSA (75 aa).

The protein belongs to the heat shock protein 90 family. As to quaternary structure, homodimer.

It localises to the cytoplasm. Functionally, molecular chaperone. Has ATPase activity. The protein is Chaperone protein HtpG of Pseudomonas paraeruginosa (strain DSM 24068 / PA7) (Pseudomonas aeruginosa (strain PA7)).